The chain runs to 351 residues: Cardiolipin synthase (CMP-forming) (351 aa).

Positions 74–120 (PAPQLSASHQHQAQQQQQQTKQPQQPYDPQQDQVPSTSTASSSKPAA) are disordered. The segment covering 76-120 (PQLSASHQHQAQQQQQQTKQPQQPYDPQQDQVPSTSTASSSKPAA) has biased composition (low complexity). 5 helical membrane-spanning segments follow: residues 139–159 (PLIG…ALAV), 191–211 (VLIG…GWVA), 251–271 (AAAA…GGGG), 280–300 (PLLI…GYLL), and 321–341 (LIMG…LAYG).

It belongs to the CDP-alcohol phosphatidyltransferase class-I family. Requires Mn(2+) as cofactor.

Its subcellular location is the mitochondrion inner membrane. The enzyme catalyses a CDP-1,2-diacyl-sn-glycerol + a 1,2-diacyl-sn-glycero-3-phospho-(1'-sn-glycerol) = a cardiolipin + CMP + H(+). In terms of biological role, catalyzes the synthesis of cardiolipin (CL) (diphosphatidylglycerol) by specifically transferring a phosphatidyl group from CDP-diacylglycerol to phosphatidylglycerol (PG). CL is a key phospholipid in mitochondrial membranes and plays important roles in maintaining the functional integrity and dynamics of mitochondria under both optimal and stress conditions. Cannot catalyze the phosphatidyl group transfer from one PG molecule to another to form CL. The protein is Cardiolipin synthase (CMP-forming) of Chlamydomonas reinhardtii (Chlamydomonas smithii).